Here is a 369-residue protein sequence, read N- to C-terminus: MKLLSLAVQDFRNLAQVELLPSPRATVLLGENGQGKTNLLEAIYFLTTLKPLRTARLAELVRHGAQTGLVAGDFDGPGGTRRVAVQVAPGGRVALLDGKPQERLDAYFDGLAAVCFAPDDLLLVKGGPEGRRRFLDRAAFNRWPAVLGEAREYVRALRARNAALRGGSPEVEASFRGPLVRAGARIVRRRRDLVEELAPRVSTAFREISGPAAPEARFAYRPAAGVQAEVGEAELAERLEHALAQRLERDRDRGFTSVGPHMDELVLALDGRGARAYASQGQQRALVLALKIAEIENLRAALGRPPLLLLDDVSSELDPTKNRYLLAYLAALPAQAFLTTTDRRLIEPAAGPDTAFYKVEGGMVSPLIS.

30-37 (GENGQGKT) provides a ligand contact to ATP.

This sequence belongs to the RecF family.

It localises to the cytoplasm. In terms of biological role, the RecF protein is involved in DNA metabolism; it is required for DNA replication and normal SOS inducibility. RecF binds preferentially to single-stranded, linear DNA. It also seems to bind ATP. The polypeptide is DNA replication and repair protein RecF (Anaeromyxobacter sp. (strain Fw109-5)).